The chain runs to 292 residues: Ribosomal protein L11 methyltransferase (292 aa).

Thr-136, Gly-159, Asp-181, and Asn-228 together coordinate S-adenosyl-L-methionine.

This sequence belongs to the methyltransferase superfamily. PrmA family.

The protein localises to the cytoplasm. The catalysed reaction is L-lysyl-[protein] + 3 S-adenosyl-L-methionine = N(6),N(6),N(6)-trimethyl-L-lysyl-[protein] + 3 S-adenosyl-L-homocysteine + 3 H(+). Methylates ribosomal protein L11. The sequence is that of Ribosomal protein L11 methyltransferase from Rhizobium johnstonii (strain DSM 114642 / LMG 32736 / 3841) (Rhizobium leguminosarum bv. viciae).